Here is a 472-residue protein sequence, read N- to C-terminus: Mitochondrial substrate carrier family protein C (472 aa).

Residues methionine 1 to tyrosine 189 are Mitochondrial intermembrane-facing. 4 EF-hand domains span residues asparagine 6–proline 41, serine 42–phenylalanine 70, glutamate 73–proline 108, and tyrosine 110–serine 145. The Ca(2+) site is built by aspartate 19, aspartate 21, asparagine 23, lysine 25, glutamate 30, aspartate 55, aspartate 57, aspartate 59, serine 61, glutamate 66, aspartate 86, asparagine 88, serine 90, threonine 92, glutamate 97, aspartate 123, asparagine 125, aspartate 127, glutamine 129, and glutamate 134. 3 Solcar repeats span residues arginine 184 to leucine 268, leucine 276 to lysine 362, and glycine 375 to alanine 461. The helical transmembrane segment at methionine 190 to leucine 207 threads the bilayer. The Mitochondrial matrix segment spans residues glutamate 208 to arginine 242. Residues glycine 243–glutamate 263 traverse the membrane as a helical segment. Topologically, residues tyrosine 264–arginine 281 are mitochondrial intermembrane. Residues phenylalanine 282–valine 302 form a helical membrane-spanning segment. Residues arginine 303–serine 330 are Mitochondrial matrix-facing. Residues isoleucine 331–valine 351 traverse the membrane as a helical segment. The Mitochondrial intermembrane portion of the chain corresponds to asparagine 352–leucine 377. A helical transmembrane segment spans residues leucine 378–valine 398. Over lysine 399–phenylalanine 441 the chain is Mitochondrial matrix. A helical transmembrane segment spans residues methionine 442 to phenylalanine 462. The Mitochondrial intermembrane portion of the chain corresponds to aspartate 463–histidine 472.

It belongs to the mitochondrial carrier (TC 2.A.29) family.

It is found in the mitochondrion inner membrane. Calcium-dependent mitochondrial solute carrier. Mitochondrial solute carriers shuttle metabolites, nucleotides, and cofactors through the mitochondrial inner membrane. The chain is Mitochondrial substrate carrier family protein C (mcfC) from Dictyostelium discoideum (Social amoeba).